A 462-amino-acid polypeptide reads, in one-letter code: Lipase A (462 aa).

The first 21 residues, 1–21 (MRVSLRSITSLLAAATAAVLA), serve as a signal peptide directing secretion. Cysteine 122 and cysteine 294 are joined by a disulfide. Catalysis depends on charge relay system residues serine 205, aspartate 355, and histidine 387. A disulfide bridge connects residues cysteine 371 and cysteine 415.

It belongs to the AB hydrolase superfamily. Lipase family. Monomer.

The protein resides in the secreted. The catalysed reaction is a triacylglycerol + H2O = a diacylglycerol + a fatty acid + H(+). In terms of biological role, hydrolyzes triglycerides, with a preference for substrates with short-chain lengths (C4 to C8). Has the highest activity with tributyrin (C4), followed by tricaproin (C6) and tricaprylin (C8). Can also hydrolyze vinylacetate (C2) and triolein (C18), but with lower efficiency. Has no activity with tripalmitin (C16). The chain is Lipase A from Moesziomyces aphidis (Pseudozyma aphidis).